The chain runs to 800 residues: Heterogeneous nuclear ribonucleoprotein U (800 aa).

S2 bears the N-acetylserine mark. A Phosphoserine modification is found at S4. The region spanning 8-42 (VKKLKVSELKEELKKRRLSDKGLKADLMDRLQAAL) is the SAP domain. N6-acetyllysine occurs at positions 17 and 21. Positions 41–257 (ALDNEAGGRP…PQPPVEEEDE (217 aa)) are disordered. Phosphoserine is present on S58. Composition is skewed to low complexity over residues 71-80 (AGLEQEAAAG) and 103-113 (ENGAAGAADAG). 2 stretches are compositionally biased toward acidic residues: residues 114-128 (AMEE…ENGD) and 134-147 (EGED…EGAG). Positions 153-173 (GEQQSQPPAAAAQQQPSQQRG) are enriched in low complexity. An N6-acetyllysine modification is found at K181. The residue at position 182 (S182) is an ADP-ribosylserine. The span at 194–205 (APPGARQGQQQA) shows a compositional bias: low complexity. The span at 209–242 (GKTEQKGGDKKRGVKRPREDHGRGYFEYIEENKY) shows a compositional bias: basic and acidic residues. The residue at position 231 (R231) is a Citrulline. Residue K241 is modified to N6-acetyllysine; alternate. K241 is covalently cross-linked (Glycyl lysine isopeptide (Lys-Gly) (interchain with G-Cter in SUMO1); alternate). K241 is covalently cross-linked (Glycyl lysine isopeptide (Lys-Gly) (interchain with G-Cter in SUMO2); alternate). Y242 carries the post-translational modification Phosphotyrosine. Phosphoserine is present on residues S243 and S247. The region spanning 244-440 (RAKSPQPPVE…VEFNFGQKEK (197 aa)) is the B30.2/SPRY domain. T262 carries the phosphothreonine modification. K328 bears the N6-acetyllysine mark. Residues 464–648 (PKGPEEKKDC…QKLLEQYKEE (185 aa)) form an ATPase domain region. A Glycyl lysine isopeptide (Lys-Gly) (interchain with G-Cter in SUMO2) cross-link involves residue K471. ATP is bound at residue 480-487 (GLPGAGKT). An N6-acetyllysine; alternate mark is found at K492 and K500. Residues K492 and K500 each participate in a glycyl lysine isopeptide (Lys-Gly) (interchain with G-Cter in SUMO2); alternate cross-link. The residue at position 508 (T508) is a Phosphothreonine. A Glycyl lysine isopeptide (Lys-Gly) (interchain with G-Cter in SUMO2) cross-link involves residue K512. K527 is subject to N6-acetyllysine. K541 is subject to N6-acetyllysine; alternate. A Glycyl lysine isopeptide (Lys-Gly) (interchain with G-Cter in SUMO2); alternate cross-link involves residue K541. Residue K550 forms a Glycyl lysine isopeptide (Lys-Gly) (interchain with G-Cter in SUMO2) linkage. T558 is subject to Phosphothreonine. Glycyl lysine isopeptide (Lys-Gly) (interchain with G-Cter in SUMO2) cross-links involve residues K585 and K602. An actin-binding region spans residues 587–602 (EDYKQRTQKKAEVEGK). K611 carries the post-translational modification N6-acetyllysine; alternate. K611 is covalently cross-linked (Glycyl lysine isopeptide (Lys-Gly) (interchain with G-Cter in SUMO2); alternate). A coiled-coil region spans residues 626–653 (DEITYVELQKEEAQKLLEQYKEESKKAL). Residues K640 and K646 each participate in a glycyl lysine isopeptide (Lys-Gly) (interchain with G-Cter in SUMO2) cross-link. Basic and acidic residues predominate over residues 647–659 (EESKKALPPEKKQ). Residues 647–729 (EESKKALPPE…GSGGIGYPYP (83 aa)) form a disordered region. Position 678 is an omega-N-methylarginine (R678). Residues 686-704 (GGFNMRGGNFRGGAPGNRG) show a composition bias toward gly residues. The tract at residues 690–715 (MRGGNFRGGAPGNRGGYNRRGNMPQR) is RNA-binding RGG-box. Residues R691, R696, and R703 each carry the asymmetric dimethylarginine modification. Residues R709 and R715 each carry the asymmetric dimethylarginine; alternate modification. R709 and R715 each carry omega-N-methylarginine; alternate. Residues 715–725 (RGGGGGSGGIG) are compositionally biased toward gly residues. An asymmetric dimethylarginine mark is found at R730 and R737. The segment at 745–774 (NYNRGGMPNRGNYNQNFRGRGNNRGYKNQS) is disordered. Residue K789 is modified to N6-acetyllysine; alternate. K789 participates in a covalent cross-link: Glycyl lysine isopeptide (Lys-Gly) (interchain with G-Cter in SUMO2); alternate.

Oligomer (via ATPase domain and RNA-binding RGG-box region); oligomerization occurs upon ATP-binding in a chromatin-associated RNAs (caRNAs)- and transcription-dependent manner and is required for chromatin decompaction. ATP hydrolysis is required to cycle from an oligomeric to monomeric state to compact chromatin. Component of the coding region determinant (CRD)-mediated complex, composed of DHX9, HNRNPU, IGF2BP1, SYNCRIP and YBX1. Identified in the spliceosome C complex. Identified in a IGF2BP1-dependent mRNP granule complex containing untranslated mRNAs. Associates with heterogeneous nuclear ribonucleoprotein (hnRNP) particles. Associates (via middle region) with the C-terminal domain (CTD) RNA polymerase II (Pol II) holoenzyme; this association occurs in a RNA-independent manner. Associates (via middle region) with the core-TFIIH basal transcription factor complex; this association inhibits the CTD phosphorylation of RNA polymerase II holoenzyme by down-regulating TFIIH kinase activity. Associates with the telomerase holoenzyme complex. Associates with spindle microtubules (MTs) in a TPX2-dependent manner. Interacts (via C-terminus) with actin; this interaction is direct and mediates association with the phosphorylated CTD of RNA polymerase II and is disrupted in presence of the long non-coding H19 RNA. Interacts with AURKA. Interacts (via C-terminus) with CBX5; this interaction is, at least in part, RNA-dependent. Interacts with CR2. Interacts with CRY1. Interacts (via C-terminus) with EP300; this interaction enhances DNA-binding to nuclear scaffold/matrix attachment region (S/MAR) elements. Interacts with ERBB4. Interacts with GEMIN5. Interacts with IGF2BP1. Interacts with IGF2BP2 and IGF2BP3. Interacts with NCL; this interaction occurs during mitosis. Interacts (via C-terminus) with NR3C1 (via C-terminus). Interacts with PLK1; this interaction induces phosphorylation of HNRNPU at Ser-58 in mitosis. Interacts with POU3F4. Interacts with SMARCA4; this interaction occurs in embryonic stem cells and stimulates global Pol II-mediated transcription. Interacts (via C-terminus) with TOP2A; this interaction protects the topoisomerase TOP2A from degradation and positively regulates the relaxation of supercoiled DNA by TOP2A in a RNA-dependent manner. Interacts with TPX2; this interaction recruits HNRNPU to spindle microtubules (MTs). Interacts with UBQLN2. Interacts (via RNA-binding RGG-box region) with ZBTB7B; the interaction facilitates the recruitment of long non-coding RNA Blnc1 by ZBTB7B. Interacts with ERCC6. Post-translationally, cleaved at Asp-94 by CASP3 during T-cell apoptosis, resulting in a loss of DNA- and chromatin-binding activities. In terms of processing, extensively phosphorylated. Phosphorylated on Ser-58 by PLK1 and dephosphorylated by protein phosphatase 2A (PP2A) in mitosis. Arg-709 and Arg-715 are dimethylated, probably to asymmetric dimethylarginine. Post-translationally, citrullinated by PADI4.

It localises to the nucleus. It is found in the nucleus matrix. The protein resides in the chromosome. The protein localises to the nucleus speckle. Its subcellular location is the cytoplasm. It localises to the cytoskeleton. It is found in the microtubule organizing center. The protein resides in the centrosome. The protein localises to the centromere. Its subcellular location is the kinetochore. It localises to the spindle. It is found in the spindle pole. The protein resides in the midbody. The protein localises to the cell surface. Its subcellular location is the cytoplasmic granule. In terms of biological role, DNA- and RNA-binding protein involved in several cellular processes such as nuclear chromatin organization, telomere-length regulation, transcription, mRNA alternative splicing and stability, Xist-mediated transcriptional silencing and mitotic cell progression. Plays a role in the regulation of interphase large-scale gene-rich chromatin organization through chromatin-associated RNAs (caRNAs) in a transcription-dependent manner, and thereby maintains genomic stability. Required for the localization of the long non-coding Xist RNA on the inactive chromosome X (Xi) and the subsequent initiation and maintenance of X-linked transcriptional gene silencing during X-inactivation. Plays a role as a RNA polymerase II (Pol II) holoenzyme transcription regulator. Promotes transcription initiation by direct association with the core-TFIIH basal transcription factor complex for the assembly of a functional pre-initiation complex with Pol II in a actin-dependent manner. Blocks Pol II transcription elongation activity by inhibiting the C-terminal domain (CTD) phosphorylation of Pol II and dissociates from Pol II pre-initiation complex prior to productive transcription elongation. Positively regulates CBX5-induced transcriptional gene silencing and retention of CBX5 in the nucleus. Negatively regulates glucocorticoid-mediated transcriptional activation. Key regulator of transcription initiation and elongation in embryonic stem cells upon leukemia inhibitory factor (LIF) signaling. Involved in the long non-coding RNA H19-mediated Pol II transcriptional repression. Participates in the circadian regulation of the core clock component BMAL1 transcription. Plays a role in the regulation of telomere length. Plays a role as a global pre-mRNA alternative splicing modulator by regulating U2 small nuclear ribonucleoprotein (snRNP) biogenesis. Plays a role in mRNA stability. Component of the CRD-mediated complex that promotes MYC mRNA stabilization. Enhances the expression of specific genes, such as tumor necrosis factor TNFA, by regulating mRNA stability, possibly through binding to the 3'-untranslated region (UTR). Plays a role in mitotic cell cycle regulation. Involved in the formation of stable mitotic spindle microtubules (MTs) attachment to kinetochore, spindle organization and chromosome congression. Phosphorylation at Ser-58 by PLK1 is required for chromosome alignement and segregation and progression through mitosis. Also contributes to the targeting of AURKA to mitotic spindle MTs. Binds to double- and single-stranded DNA and RNA, poly(A), poly(C) and poly(G) oligoribonucleotides. Binds to chromatin-associated RNAs (caRNAs). Associates with chromatin to scaffold/matrix attachment region (S/MAR) elements in a chromatin-associated RNAs (caRNAs)-dependent manner. Binds (via RNA-binding RGG-box region) to the long non-coding Xist RNA; this binding is direct and bridges the Xist RNA and the inactive chromosome X (Xi). Binds the long non-coding H19 RNA. Binds to SMN1/2 pre-mRNAs at G/U-rich regions. Binds to small nuclear RNAs (snRNAs). Binds to the 3'-UTR of TNFA mRNA. Also negatively regulates embryonic stem cell differentiation upon LIF signaling. Required for embryonic development. Binds to brown fat long non-coding RNA 1 (Blnc1); facilitates the recruitment of Blnc1 by ZBTB7B required to drive brown and beige fat development and thermogenesis. The sequence is that of Heterogeneous nuclear ribonucleoprotein U from Mus musculus (Mouse).